Here is a 26-residue protein sequence, read N- to C-terminus: GLWKNMLSGIGKLAGQAALGAVKTLV.

Val26 carries the valine amide modification.

In terms of tissue distribution, expressed by the skin glands.

It is found in the secreted. Functionally, has antimicrobial activity. The protein is Dermaseptin-J1 of Phasmahyla jandaia (Jandaia leaf frog).